The primary structure comprises 73 residues: Alternative prion protein (73 aa).

The chain crosses the membrane as a helical span at residues 32-52 (WWWLGAASWWWLGAAPWWWLG).

In terms of tissue distribution, detected in brain homogenate, primary neurons, and peripheral blood mononuclear cells (at protein level).

It is found in the mitochondrion outer membrane. This Homo sapiens (Human) protein is Alternative prion protein (PRNP).